The following is a 5005-amino-acid chain: Bridge-like lipid transfer protein family member 1 (5005 aa).

Residues 26–46 (NVVWLLVATILSCGWIIYLTY) traverse the membrane as a helical segment. 3 disordered regions span residues 691–721 (LRPSQKTSDRVVSSPSTSSRPPIDPSELPPD), 1218–1257 (LSLQVPLRSHSSSSSSEENSSSSAAQPLLAGEKESPSSVA), and 1269–1310 (GTKR…LKRQ). Composition is skewed to low complexity over residues 700–711 (RVVSSPSTSSRP) and 1226–1240 (SHSSSSSSEENSSSS). Residues 1248–1257 (GEKESPSSVA) show a composition bias toward basic and acidic residues. Residues 1278–1303 (SIPTEISGNSPVSPNTQDKSVGQSPL) are compositionally biased toward polar residues. 3 positions are modified to phosphoserine: serine 1301, serine 1305, and serine 1323. At threonine 1325 the chain carries Phosphothreonine. Disordered regions lie at residues 1343 to 1376 (SDVSRSDENVLDSPKQRRSFGSFPYTPSADSNSF), 1400 to 1427 (EFEPISSDEGPGTYPGRKKKKKQTQQID), 1521 to 1548 (TNKRTSKSSLHRPLDLDTPTSEESSSSF), and 1676 to 1704 (FSENLSSKQDIRGTKTEQSTIGTTNQGQA). 2 positions are modified to phosphoserine: serine 1355 and serine 1406. The segment covering 1521–1530 (TNKRTSKSSL) has biased composition (basic residues). Over residues 1691 to 1704 (TEQSTIGTTNQGQA) the composition is skewed to polar residues. Phosphoserine is present on residues serine 1805 and serine 1808. Disordered stretches follow at residues 1924 to 1991 (DTER…PLMP), 2401 to 2420 (SDQNTLDGTHSQHSTSQDDV), and 2598 to 2677 (TAGS…KDVV). 4 stretches are compositionally biased toward polar residues: residues 1931-1948 (LTSNNSSDSPTGSGYNTD), 1959-1971 (TSPSSDLNGNSVS), 2401-2418 (SDQNTLDGTHSQHSTSQD), and 2598-2608 (TAGSASPTPTF). Phosphoserine is present on residues serine 2601 and serine 2603. A compositionally biased stretch (low complexity) spans 2619–2638 (SDFSRSSRGSLNGGNRVNNA). Residues 2643-2665 (TNNENNKKESRNKNSLGRSERRT) show a composition bias toward basic and acidic residues. Residue serine 2755 is modified to Phosphoserine. The tract at residues 2928 to 2967 (RQPSTAPQPVKEDIATPLPSEKTPTSVNQTPVETNEFPQL) is disordered. The segment covering 2949-2964 (KTPTSVNQTPVETNEF) has biased composition (polar residues). The residue at position 3562 (serine 3562) is a Phosphoserine. Polar residues predominate over residues 3612–3622 (PSYSRSKSISA). Disordered regions lie at residues 3612–3661 (PSYS…VTFN), 3686–3744 (SSNS…ERFY), 3821–3843 (RRSYDRSSRSLDQDSPSKKKKFQ), 3914–3954 (YGMK…KGKG), 4088–4146 (GTTY…SSSS), and 4325–4394 (QSAS…KAAS). Serine 3653 bears the Phosphoserine mark. Residues 3686-3700 (SSNSEGSCSVFSSPK) are compositionally biased toward polar residues. The span at 3727–3736 (EDSEKDEKDE) shows a compositional bias: acidic residues. The span at 3821–3837 (RRSYDRSSRSLDQDSPS) shows a compositional bias: basic and acidic residues. Polar residues-rich tracts occupy residues 3931–3940 (TVQSKTNTLL) and 4098–4113 (PGGNATQSGTKTSASK). A compositionally biased stretch (low complexity) spans 4122-4146 (LGSPLGRSRHSSSQSDLTSSSSSSS). The residue at position 4124 (serine 4124) is a Phosphoserine. Over residues 4325 to 4358 (QSASFTHMPQSPNVFNEHMTNSTMSPGTVGQSLK) the composition is skewed to polar residues. Low complexity predominate over residues 4359–4372 (SPASIRSRSVSDSS). The span at 4381 to 4394 (KTSTPFNKSNKAAS) shows a compositional bias: polar residues.

In terms of tissue distribution, highly expressed in testis and ovary. Weakly or not expressed in other tissues.

Its subcellular location is the cell membrane. It localises to the endoplasmic reticulum membrane. It is found in the mitochondrion membrane. Tube-forming lipid transport protein which provides phosphatidylethanolamine for glycosylphosphatidylinositol (GPI) anchor synthesis in the endoplasmic reticulum. Plays a role in endosomal trafficking and endosome recycling. Also involved in the actin cytoskeleton and cilia structural dynamics. Acts as a regulator of phagocytosis. The polypeptide is Bridge-like lipid transfer protein family member 1 (Homo sapiens (Human)).